The chain runs to 640 residues: Protein ALTERED PHOSPHATE STARVATION RESPONSE 1 (640 aa).

Positions 60-175 are disordered; the sequence is TPLHLHHNPP…ATPQASSVVS (116 aa). A compositionally biased stretch (pro residues) spans 68–87; that stretch reads PPSPSPPPPPPPRPPPPPLS. The segment covering 88 to 103 has biased composition (low complexity); that stretch reads PGSETTTWTTTTTSSV. Positions 104–118 are enriched in pro residues; sequence LPPPPPPPPPPPPPS. Residues 144-173 are compositionally biased toward low complexity; the sequence is TTATRTATGTGSDAAVTTAPTTATPQASSV. Residues 336–371 are a coiled coil; that stretch reads KTEKAKKDVEKLESQLSVSSQAIQSASNEIIKLRET.

As to expression, expressed in the root tip of primary and lateral roots, specifically in the meristematic region, including the quiescent center and lateral root cap cells.

Its subcellular location is the nucleus. Required for the coordination of cell differentiation and cell elongation in the root tip. Required for the coordination of cell processes necessary for correct root growth in response to phosphate starvation, through the modulation of the auxin transporter protein PIN7. The protein is Protein ALTERED PHOSPHATE STARVATION RESPONSE 1 of Arabidopsis thaliana (Mouse-ear cress).